Here is a 262-residue protein sequence, read N- to C-terminus: uncharacterized protein (262 aa).

The 65-residue stretch at Leu-6–Val-70 folds into the S4 RNA-binding domain. Residue Asp-108 is the Nucleophile of the active site.

Belongs to the pseudouridine synthase RsuA family.

The enzyme catalyses a uridine in RNA = a pseudouridine in RNA. This is an uncharacterized protein from Helicobacter pylori (strain J99 / ATCC 700824) (Campylobacter pylori J99).